Consider the following 176-residue polypeptide: Vitamin K epoxide reductase complex subunit 1-like protein 1 (176 aa).

The Cytoplasmic portion of the chain corresponds to 1–13 (MAAPVLLRVSVPR). A helical transmembrane segment spans residues 14 to 36 (WERVARYAVCAAGILLSIYAYHV). Topologically, residues 37–87 (EREKERDPEHRALCDLGPWVKCSAALASRWGRGFGLLGSIFGKDGVLNQPN) are lumenal. Cys-50 and Cys-58 form a disulfide bridge. Residue Asn-87 participates in (S)-warfarin binding. A helical membrane pass occupies residues 88-102 (SVFGLIFYILQLLLG). Residues 103-107 (MTASA) lie on the Cytoplasmic side of the membrane. The chain crosses the membrane as a helical span at residues 108 to 135 (VAALILMTSSIMSVVGSLYLAYILYFVL). At 136–138 (KEF) the chain is on the lumenal side. An intrachain disulfide couples Cys-139 to Cys-142. Residues 139 to 160 (CIICIVTYVLNFLLLIINYKRL) traverse the membrane as a helical segment. Phylloquinone is bound by residues Cys-142 and Tyr-146. A (S)-warfarin-binding site is contributed by Tyr-146. Over 161 to 176 (VYLNEAWKRQLQPKQD) the chain is Cytoplasmic.

It belongs to the VKOR family.

It is found in the endoplasmic reticulum membrane. The catalysed reaction is phylloquinone + [protein]-disulfide + H2O = 2,3-epoxyphylloquinone + [protein]-dithiol. It carries out the reaction phylloquinol + [protein]-disulfide = phylloquinone + [protein]-dithiol. Its activity is regulated as follows. Inhibited by warfarin (coumadin). Warfarin locks VKORC1 in both redox states into the closed conformation. Involved in vitamin K metabolism. Can reduce inactive vitamin K 2,3-epoxide to active vitamin K, and may contribute to vitamin K-mediated protection against oxidative stress. Plays a role in vitamin K-dependent gamma-carboxylation of Glu residues in target proteins. The polypeptide is Vitamin K epoxide reductase complex subunit 1-like protein 1 (VKORC1L1) (Homo sapiens (Human)).